We begin with the raw amino-acid sequence, 518 residues long: Bifunctional purine biosynthesis protein PurH (518 aa).

Residues 1–144 (MNRRAVLSVS…KNQERVSIVV (144 aa)) form the MGS-like domain.

The protein belongs to the PurH family.

It carries out the reaction (6R)-10-formyltetrahydrofolate + 5-amino-1-(5-phospho-beta-D-ribosyl)imidazole-4-carboxamide = 5-formamido-1-(5-phospho-D-ribosyl)imidazole-4-carboxamide + (6S)-5,6,7,8-tetrahydrofolate. The enzyme catalyses IMP + H2O = 5-formamido-1-(5-phospho-D-ribosyl)imidazole-4-carboxamide. The protein operates within purine metabolism; IMP biosynthesis via de novo pathway; 5-formamido-1-(5-phospho-D-ribosyl)imidazole-4-carboxamide from 5-amino-1-(5-phospho-D-ribosyl)imidazole-4-carboxamide (10-formyl THF route): step 1/1. It participates in purine metabolism; IMP biosynthesis via de novo pathway; IMP from 5-formamido-1-(5-phospho-D-ribosyl)imidazole-4-carboxamide: step 1/1. In Desulfitobacterium hafniense (strain DSM 10664 / DCB-2), this protein is Bifunctional purine biosynthesis protein PurH.